We begin with the raw amino-acid sequence, 60 residues long: Large ribosomal subunit protein uL30 (60 aa).

Belongs to the universal ribosomal protein uL30 family. As to quaternary structure, part of the 50S ribosomal subunit.

The chain is Large ribosomal subunit protein uL30 from Burkholderia ambifaria (strain MC40-6).